A 203-amino-acid polypeptide reads, in one-letter code: Proteasome subunit beta 2 (203 aa).

The propeptide at 1-9 is removed in mature form; by autocatalysis; that stretch reads MGEEVSIGA. T10 functions as the Nucleophile in the catalytic mechanism.

The protein belongs to the peptidase T1B family. In terms of assembly, the 20S proteasome core is composed of 14 alpha and 14 beta subunits that assemble into four stacked heptameric rings, resulting in a barrel-shaped structure. The two inner rings, each composed of seven catalytic beta subunits, are sandwiched by two outer rings, each composed of seven alpha subunits. The catalytic chamber with the active sites is on the inside of the barrel. Has a gated structure, the ends of the cylinder being occluded by the N-termini of the alpha-subunits. Is capped at one or both ends by the proteasome regulatory ATPase, PAN.

The protein resides in the cytoplasm. The catalysed reaction is Cleavage of peptide bonds with very broad specificity.. With respect to regulation, the formation of the proteasomal ATPase PAN-20S proteasome complex, via the docking of the C-termini of PAN into the intersubunit pockets in the alpha-rings, triggers opening of the gate for substrate entry. Interconversion between the open-gate and close-gate conformations leads to a dynamic regulation of the 20S proteasome proteolysis activity. Its function is as follows. Component of the proteasome core, a large protease complex with broad specificity involved in protein degradation. This is Proteasome subunit beta 2 from Pyrobaculum calidifontis (strain DSM 21063 / JCM 11548 / VA1).